Here is an 891-residue protein sequence, read N- to C-terminus: Tubulin polyglutamylase TTLL6 (891 aa).

Disordered stretches follow at residues 1-25 (MGALLLHPSRRGPAGVVASWTSSPA) and 44-106 (SQAR…KRKK). Residues 63–76 (SEEKGDSSKEDPKE) are compositionally biased toward basic and acidic residues. The segment covering 88–99 (GAQNGLQNAQQQ) has biased composition (low complexity). Positions 106-449 (KKRLVINLSS…ESCDKKKVLE (344 aa)) constitute a TTL domain. Residues lysine 223, 229–230 (QG), 251–254 (QLYI), and 264–266 (KFD) each bind ATP. Glutamine 229 lines the a protein pocket. Arginine 290 contacts L-glutamate. 312-313 (TN) provides a ligand contact to ATP. Residues tyrosine 314, serine 315, and lysine 332 each contribute to the L-glutamate site. Positions 395, 408, and 410 each coordinate Mg(2+). Histidine 411 contributes to the a protein binding site. The interval 420–499 (RLDKEVKDGL…CGGFRLIYPS (80 aa)) is c-MTBD region. Lysine 426 lines the L-glutamate pocket. Disordered regions lie at residues 546-584 (QMKKKVEMQGESAGEQVRKKGMRGWQQKQQQKDKAATQA), 607-636 (GERKNETDSSLNQEAPTEEASSVFPKLTSA), 687-711 (TTPESTTQLSISPKSPPTLAVTASS), and 800-820 (NNLSQNPSLPGECHSRSDSSG). Polar residues predominate over residues 687–699 (TTPESTTQLSISP).

This sequence belongs to the tubulin--tyrosine ligase family. As to quaternary structure, found in a complex with CEP41. The cofactor is Mg(2+).

The protein localises to the cytoplasm. It is found in the cytoskeleton. Its subcellular location is the cilium axoneme. The protein resides in the cilium basal body. It catalyses the reaction L-glutamyl-[protein] + L-glutamate + ATP = gamma-L-glutamyl-L-glutamyl-[protein] + ADP + phosphate + H(+). The catalysed reaction is (L-glutamyl)(n)-gamma-L-glutamyl-L-glutamyl-[protein] + L-glutamate + ATP = (L-glutamyl)(n+1)-gamma-L-glutamyl-L-glutamyl-[protein] + ADP + phosphate + H(+). In terms of biological role, polyglutamylase which modifies both tubulin and non-tubulin proteins, generating alpha-linked polyglutamate side chains on the gamma-carboxyl group of specific glutamate residues of target proteins. Preferentially mediates ATP-dependent long polyglutamate chain elongation over the initiation step of the polyglutamylation reaction. Preferentially modifies the alpha-tubulin tail over a beta-tail. Promotes tubulin polyglutamylation which stimulates spastin/SPAST-mediated microtubule severing, thereby regulating microtubule functions. Mediates microtubule polyglutamylation in primary cilia axoneme, which is important for ciliary structural formation and motility. Mediates microtubule polyglutamylation in motile cilia, necessary for the regulation of ciliary coordinated beating. Polyglutamylates non-tubulin protein nucleotidyltransferase CGAS, leading to CGAS DNA-binding inhibition, thereby preventing antiviral defense response. This is Tubulin polyglutamylase TTLL6 from Homo sapiens (Human).